A 154-amino-acid chain; its full sequence is Myoglobin (154 aa).

Residues 2-148 (GLSDGEWQLV…FRNDIAAKYK (147 aa)) enclose the Globin domain. The residue at position 4 (serine 4) is a Phosphoserine. Histidine 65 contacts nitrite. Histidine 65 serves as a coordination point for O2. A Phosphothreonine modification is found at threonine 68. Residue histidine 94 participates in heme b binding.

Monomer.

Its subcellular location is the cytoplasm. It localises to the sarcoplasm. It catalyses the reaction Fe(III)-heme b-[protein] + nitric oxide + H2O = Fe(II)-heme b-[protein] + nitrite + 2 H(+). The catalysed reaction is H2O2 + AH2 = A + 2 H2O. Its function is as follows. Monomeric heme protein which primary function is to store oxygen and facilitate its diffusion within muscle tissues. Reversibly binds oxygen through a pentacoordinated heme iron and enables its timely and efficient release as needed during periods of heightened demand. Depending on the oxidative conditions of tissues and cells, and in addition to its ability to bind oxygen, it also has a nitrite reductase activity whereby it regulates the production of bioactive nitric oxide. Under stress conditions, like hypoxia and anoxia, it also protects cells against reactive oxygen species thanks to its pseudoperoxidase activity. The chain is Myoglobin from Hystrix cristata (North African crested porcupine).